We begin with the raw amino-acid sequence, 113 residues long: Large ribosomal subunit protein uL22 (113 aa).

Belongs to the universal ribosomal protein uL22 family. In terms of assembly, part of the 50S ribosomal subunit.

In terms of biological role, this protein binds specifically to 23S rRNA; its binding is stimulated by other ribosomal proteins, e.g. L4, L17, and L20. It is important during the early stages of 50S assembly. It makes multiple contacts with different domains of the 23S rRNA in the assembled 50S subunit and ribosome. Functionally, the globular domain of the protein is located near the polypeptide exit tunnel on the outside of the subunit, while an extended beta-hairpin is found that lines the wall of the exit tunnel in the center of the 70S ribosome. This is Large ribosomal subunit protein uL22 from Bacillus thuringiensis subsp. konkukian (strain 97-27).